The chain runs to 179 residues: Large ribosomal subunit protein uL5 (179 aa).

The protein belongs to the universal ribosomal protein uL5 family. Part of the 50S ribosomal subunit; part of the 5S rRNA/L5/L18/L25 subcomplex. Contacts the 5S rRNA and the P site tRNA. Forms a bridge to the 30S subunit in the 70S ribosome.

This is one of the proteins that bind and probably mediate the attachment of the 5S RNA into the large ribosomal subunit, where it forms part of the central protuberance. In the 70S ribosome it contacts protein S13 of the 30S subunit (bridge B1b), connecting the 2 subunits; this bridge is implicated in subunit movement. Contacts the P site tRNA; the 5S rRNA and some of its associated proteins might help stabilize positioning of ribosome-bound tRNAs. This is Large ribosomal subunit protein uL5 from Bacillus cereus (strain G9842).